Consider the following 570-residue polypeptide: MKNNTMNTLIGAAQDESPVDLLVRNVRLVNVLSGEIHDAHIAVKDGIVVGFEEYEALHVVEGNGRHCIPGLIDGHIHIESTLLSPARFAAAAAPHGTAAVMCDPHEIANVMGAEGIEYMLHASAGLPLSVYVMMPSCVPATHMETAGATLRAEDVQDFLSRYPDRMPGLAEMMNYPGVLFRDDEVMAKLEAAASHVIDGHAPLLRGKALNAYVLGGPASDHETSDADEAREKLRKGMHLMIREGGSQEHNLEELVTVLNEFNTQNVSFVSDDKVVNDLMESGHMDDILRKAMAAGIPPVRAVQMASINTARYFRLHRRGAVAPGYRADFVLLDDLQTMRISECYLGGRNVKEIDFTGHSAAFSANTVHVAGLNTDSLHVAAGNGNLRVIGIVPGQVITHALELPPTLREGAAVADPSRDLAKLAVFERHKGTGNVGLGFTAGLGLHKGALAGTVSHDSHNLIVAGMDDADMITAAEEVQCIGGGLAVACDGRVLASLPLPIAGLMSDAPVEDVLAGLRGVNEALATLGYKLSSPFAALAFLSLAVIPSLKLTDKGLVDVHKFEIVPLWTA.

Belongs to the metallo-dependent hydrolases superfamily. Adenine deaminase family. It depends on Mn(2+) as a cofactor.

The catalysed reaction is adenine + H2O + H(+) = hypoxanthine + NH4(+). The sequence is that of Adenine deaminase from Oleidesulfovibrio alaskensis (strain ATCC BAA-1058 / DSM 17464 / G20) (Desulfovibrio alaskensis).